We begin with the raw amino-acid sequence, 137 residues long: Global transcriptional regulator Spx (137 aa).

C10 and C13 are joined by a disulfide.

This sequence belongs to the ArsC family. Spx subfamily. Interacts with the C-terminal domain of the alpha subunit of the RNAP.

It is found in the cytoplasm. Global transcriptional regulator that plays a key role in stress response and exerts either positive or negative regulation of genes. Acts by interacting with the C-terminal domain of the alpha subunit of the RNA polymerase (RNAP). This interaction can enhance binding of RNAP to the promoter region of target genes and stimulate their transcription, or block interaction of RNAP with activator. This chain is Global transcriptional regulator Spx, found in Streptococcus mutans serotype c (strain ATCC 700610 / UA159).